A 325-amino-acid polypeptide reads, in one-letter code: Peroxidase 1 (325 aa).

Positions 1-21 (MAIKNILALVVLLSVVGVSVA) are cleaved as a signal peptide. Disulfide bonds link C35-C113, C68-C73, C119-C321, and C198-C230. H66 acts as the Proton acceptor in catalysis. Ca(2+) is bound by residues D67, V70, G72, D74, and S76. Substrate is bound at residue P161. H191 is a binding site for heme b. T192 lines the Ca(2+) pocket. Residue N207 is glycosylated (N-linked (GlcNAc...) asparagine). Residues D242, S245, and D250 each coordinate Ca(2+).

It belongs to the peroxidase family. Classical plant (class III) peroxidase subfamily. The cofactor is heme b. Ca(2+) serves as cofactor. In terms of tissue distribution, slightly expressed in roots.

The protein localises to the secreted. The catalysed reaction is 2 a phenolic donor + H2O2 = 2 a phenolic radical donor + 2 H2O. Functionally, removal of H(2)O(2), oxidation of toxic reductants, biosynthesis and degradation of lignin, suberization, auxin catabolism, response to environmental stresses such as wounding, pathogen attack and oxidative stress. These functions might be dependent on each isozyme/isoform in each plant tissue. The chain is Peroxidase 1 (PER1) from Arabidopsis thaliana (Mouse-ear cress).